The primary structure comprises 426 residues: 5-aminovalerate aminotransferase DavT (426 aa).

Residues 112 to 113, Tyr139, and 240 to 243 each bind pyridoxal 5'-phosphate; these read GS and DEVQ. Lys269 bears the N6-(pyridoxal phosphate)lysine mark. Residue Thr298 coordinates pyridoxal 5'-phosphate.

This sequence belongs to the class-III pyridoxal-phosphate-dependent aminotransferase family. The cofactor is pyridoxal 5'-phosphate.

It catalyses the reaction 5-aminopentanoate + 2-oxoglutarate = 5-oxopentanoate + L-glutamate. Catalyzes the conversion of 5-aminovalerate to 5-oxopentanoate. The polypeptide is 5-aminovalerate aminotransferase DavT (davT) (Pseudomonas aeruginosa (strain ATCC 15692 / DSM 22644 / CIP 104116 / JCM 14847 / LMG 12228 / 1C / PRS 101 / PAO1)).